Here is a 124-residue protein sequence, read N- to C-terminus: UPF0102 protein Mmc1_3298 (124 aa).

This sequence belongs to the UPF0102 family.

The polypeptide is UPF0102 protein Mmc1_3298 (Magnetococcus marinus (strain ATCC BAA-1437 / JCM 17883 / MC-1)).